Reading from the N-terminus, the 56-residue chain is Small ribosomal subunit protein uS14 (56 aa).

Zn(2+) contacts are provided by C21, C24, C39, and C42.

This sequence belongs to the universal ribosomal protein uS14 family. Requires Zn(2+) as cofactor.

The sequence is that of Small ribosomal subunit protein uS14 (RPS29) from Eremothecium gossypii (strain ATCC 10895 / CBS 109.51 / FGSC 9923 / NRRL Y-1056) (Yeast).